We begin with the raw amino-acid sequence, 312 residues long: Cytoplasmic dynein intermediate light chain DYN3 (312 aa).

It belongs to the dynein light intermediate chain DYN3 family. The dynein complex consists of at least two heavy chains and a number of intermediate and light chains. Interacts with DYN1.

It localises to the cytoplasm. Its subcellular location is the cytoskeleton. Its function is as follows. Component of the cytoplasmic dynein which acts as a motor for the intracellular retrograde motility of vesicles and organelles along microtubules. May play an important role in the proper orientation of the mitotic spindle into the budding daughter cell yeast. Probably required for normal progression of the cell cycle. The chain is Cytoplasmic dynein intermediate light chain DYN3 (DYN3) from Saccharomyces cerevisiae (strain ATCC 204508 / S288c) (Baker's yeast).